The primary structure comprises 482 residues: ATP synthase subunit beta (482 aa).

168–175 (GGAGVGKT) lines the ATP pocket.

The protein belongs to the ATPase alpha/beta chains family. F-type ATPases have 2 components, CF(1) - the catalytic core - and CF(0) - the membrane proton channel. CF(1) has five subunits: alpha(3), beta(3), gamma(1), delta(1), epsilon(1). CF(0) has three main subunits: a(1), b(2) and c(9-12). The alpha and beta chains form an alternating ring which encloses part of the gamma chain. CF(1) is attached to CF(0) by a central stalk formed by the gamma and epsilon chains, while a peripheral stalk is formed by the delta and b chains.

It is found in the cell membrane. It catalyses the reaction ATP + H2O + 4 H(+)(in) = ADP + phosphate + 5 H(+)(out). Produces ATP from ADP in the presence of a proton gradient across the membrane. The catalytic sites are hosted primarily by the beta subunits. In Nocardia farcinica (strain IFM 10152), this protein is ATP synthase subunit beta.